The following is a 173-amino-acid chain: 3-hydroxydecanoyl-[acyl-carrier-protein] dehydratase (173 aa).

Residue His-71 is part of the active site.

It belongs to the thioester dehydratase family. FabA subfamily. As to quaternary structure, homodimer.

The protein localises to the cytoplasm. The catalysed reaction is a (3R)-hydroxyacyl-[ACP] = a (2E)-enoyl-[ACP] + H2O. It catalyses the reaction (3R)-hydroxydecanoyl-[ACP] = (2E)-decenoyl-[ACP] + H2O. It carries out the reaction (2E)-decenoyl-[ACP] = (3Z)-decenoyl-[ACP]. The protein operates within lipid metabolism; fatty acid biosynthesis. Its function is as follows. Necessary for the introduction of cis unsaturation into fatty acids. Catalyzes the dehydration of (3R)-3-hydroxydecanoyl-ACP to E-(2)-decenoyl-ACP and then its isomerization to Z-(3)-decenoyl-ACP. Can catalyze the dehydratase reaction for beta-hydroxyacyl-ACPs with saturated chain lengths up to 16:0, being most active on intermediate chain length. In Baumannia cicadellinicola subsp. Homalodisca coagulata, this protein is 3-hydroxydecanoyl-[acyl-carrier-protein] dehydratase.